A 256-amino-acid polypeptide reads, in one-letter code: Catechol O-methyltransferase A (256 aa).

Positions 1 to 27 (MLWVVLAVVVVLASVLVLLRQSSGLLA) are cleaved as a signal peptide. Asparagine 58 carries an N-linked (GlcNAc...) asparagine glycan. Valine 84, serine 114, glutamate 132, and aspartate 183 together coordinate S-adenosyl-L-methionine. Mg(2+) is bound at residue aspartate 183. A substrate-binding site is contributed by lysine 186. Aspartate 211 and asparagine 212 together coordinate Mg(2+). Substrate contacts are provided by asparagine 212 and glutamate 241.

The protein belongs to the class I-like SAM-binding methyltransferase superfamily. Cation-dependent O-methyltransferase family. The cofactor is Mg(2+). Widely expressed. Has higher expression in females compared to males. Strongly expressed in liver and diencephalon. Expressed at lower levels in hindbrain, spinal cord, eye, telencephalon, spleen, gut, gill and muscle. Detected in ovary and testis. In eye, detected in all layers of the retina with highest expression in the inner nuclear layer. In gut, expressed in the lamina propria but has little or no expression in gut epithelium. In brain, has strongest expression near the midline of the telencephalon, in the periventricular gray zone of the optic tectum, in the preglomerular nucleus, and near the walls of the diencephalic ventricle.

Its subcellular location is the secreted. The catalysed reaction is a catechol + S-adenosyl-L-methionine = a guaiacol + S-adenosyl-L-homocysteine + H(+). Its function is as follows. Catalyzes the O-methylation, and thereby the inactivation, of catecholamine neurotransmitters and catechol hormones. Shows highest activity towards catecholestrogens and dobutamine. Also has lower activity towards L-DOPA, dopamine and epinephrine. Active towards the xenobiotic compounds methyl-DOPA, carbidopa, isoproterenol, and apomorphine. This Danio rerio (Zebrafish) protein is Catechol O-methyltransferase A.